The sequence spans 161 residues: Urease accessory protein UreE (161 aa).

This sequence belongs to the UreE family. Homodimer.

Its subcellular location is the cytoplasm. Involved in urease metallocenter assembly. Binds nickel. Probably functions as a nickel donor during metallocenter assembly. It is not essential for urease activity. In Proteus mirabilis (strain HI4320), this protein is Urease accessory protein UreE.